We begin with the raw amino-acid sequence, 297 residues long: Phospholipid scramblase 2 (297 aa).

The interval 1-72 (MRSWNSLFCL…NQPGRPEGVP (72 aa)) is proline-rich domain (PRD). The Cytoplasmic portion of the chain corresponds to 1–276 (MRSWNSLFCL…IQFPRDLDVK (276 aa)). Residue threonine 149 is modified to Phosphothreonine; by PKC. S-palmitoyl cysteine attachment occurs at residues cysteine 172, cysteine 173, cysteine 174, cysteine 176, and cysteine 177. A helical membrane pass occupies residues 277–293 (MKAVMIGACFLIDYMFF). Topologically, residues 294–297 (ERTR) are extracellular.

The protein belongs to the phospholipid scramblase family. It depends on Ca(2+) as a cofactor. As to expression, expression of isoform 1 seems restricted to testis.

The protein resides in the membrane. The protein localises to the nucleus. It carries out the reaction a 1,2-diacyl-sn-glycero-3-phosphocholine(in) = a 1,2-diacyl-sn-glycero-3-phosphocholine(out). In terms of biological role, may catalyze calcium-induced ATP-independent rapid bidirectional and non-specific movement of phospholipids (lipid scrambling or lipid flip-flop) between the inner and outer leaflet of the plasma membrane. Has no phospholipid scramblase activity, due to the lack of a N-terminal proline-rich domain. The polypeptide is Phospholipid scramblase 2 (Homo sapiens (Human)).